A 422-amino-acid polypeptide reads, in one-letter code: D-amino acid dehydrogenase (422 aa).

3–17 lines the FAD pocket; it reads VVVIGAGVVGTASAW.

The protein belongs to the DadA oxidoreductase family. The cofactor is FAD.

The catalysed reaction is a D-alpha-amino acid + A + H2O = a 2-oxocarboxylate + AH2 + NH4(+). It functions in the pathway amino-acid degradation; D-alanine degradation; NH(3) and pyruvate from D-alanine: step 1/1. Oxidative deamination of D-amino acids. The chain is D-amino acid dehydrogenase from Paramagnetospirillum magneticum (strain ATCC 700264 / AMB-1) (Magnetospirillum magneticum).